Reading from the N-terminus, the 253-residue chain is Acetylglutamate kinase (253 aa).

Residues 40 to 41 (GG), R62, and N154 contribute to the substrate site.

It belongs to the acetylglutamate kinase family. ArgB subfamily.

It localises to the cytoplasm. The enzyme catalyses N-acetyl-L-glutamate + ATP = N-acetyl-L-glutamyl 5-phosphate + ADP. It functions in the pathway amino-acid biosynthesis; L-arginine biosynthesis; N(2)-acetyl-L-ornithine from L-glutamate: step 2/4. Functionally, catalyzes the ATP-dependent phosphorylation of N-acetyl-L-glutamate. In Staphylococcus saprophyticus subsp. saprophyticus (strain ATCC 15305 / DSM 20229 / NCIMB 8711 / NCTC 7292 / S-41), this protein is Acetylglutamate kinase.